The sequence spans 150 residues: MVHATSPLLLLLLLSLALVAPGLSARKCSLTGEWDNNLGSIMTIGAVNDNGEFNGTYITAVADNPGNIKLSPLLGIQHKRACQPTFGFTVHWNFSESTSVFVGQCFVDRSGKEVLKTKWLQRLAVDDISDDWKATRVGYNNFTRQRTVEE.

The N-terminal stretch at 1-24 is a signal peptide; it reads MVHATSPLLLLLLLSLALVAPGLS. The 122-residue stretch at 26–147 folds into the Avidin-like domain; it reads RKCSLTGEWD…GYNNFTRQRT (122 aa). An intrachain disulfide couples Cys28 to Cys105. Residues Asn36 and Ser40 each contribute to the biotin site. Asn54 is a glycosylation site (N-linked (GlcNAc...) asparagine). Residues Tyr57, Thr59, and Asp63 each contribute to the biotin site. Asn93 carries an N-linked (GlcNAc...) asparagine glycan. Biotin-binding residues include Ser95, Ser99, and Asn140. N-linked (GlcNAc...) asparagine glycosylation is present at Asn141.

It belongs to the avidin/streptavidin family. Homotetramer. Post-translationally, glycosylated.

It localises to the secreted. Forms a strong non-covalent specific complex with biotin. The polypeptide is Avidin-related protein 6 (AVR6) (Gallus gallus (Chicken)).